Consider the following 575-residue polypeptide: Isocitrate dehydrogenase kinase/phosphatase (575 aa).

Residues 316 to 322 and Lys-337 each bind ATP; that span reads ARGDKGL. Residue Asp-372 is part of the active site.

This sequence belongs to the AceK family.

Its subcellular location is the cytoplasm. The catalysed reaction is L-seryl-[isocitrate dehydrogenase] + ATP = O-phospho-L-seryl-[isocitrate dehydrogenase] + ADP + H(+). Its function is as follows. Bifunctional enzyme which can phosphorylate or dephosphorylate isocitrate dehydrogenase (IDH) on a specific serine residue. This is a regulatory mechanism which enables bacteria to bypass the Krebs cycle via the glyoxylate shunt in response to the source of carbon. When bacteria are grown on glucose, IDH is fully active and unphosphorylated, but when grown on acetate or ethanol, the activity of IDH declines drastically concomitant with its phosphorylation. This Anaeromyxobacter sp. (strain Fw109-5) protein is Isocitrate dehydrogenase kinase/phosphatase.